Here is a 322-residue protein sequence, read N- to C-terminus: Phosphatidylserine decarboxylase proenzyme (322 aa).

Residues aspartate 90, histidine 147, and serine 254 each act as charge relay system; for autoendoproteolytic cleavage activity in the active site. The active-site Schiff-base intermediate with substrate; via pyruvic acid; for decarboxylase activity is the serine 254. Position 254 is a pyruvic acid (Ser); by autocatalysis (serine 254). The tract at residues 294-322 (EAEPAPLPEEEINAEHDASPLVDDKKDES) is disordered. The segment covering 306-322 (NAEHDASPLVDDKKDES) has biased composition (basic and acidic residues).

This sequence belongs to the phosphatidylserine decarboxylase family. PSD-B subfamily. Prokaryotic type I sub-subfamily. Heterodimer of a large membrane-associated beta subunit and a small pyruvoyl-containing alpha subunit. It depends on pyruvate as a cofactor. Is synthesized initially as an inactive proenzyme. Formation of the active enzyme involves a self-maturation process in which the active site pyruvoyl group is generated from an internal serine residue via an autocatalytic post-translational modification. Two non-identical subunits are generated from the proenzyme in this reaction, and the pyruvate is formed at the N-terminus of the alpha chain, which is derived from the carboxyl end of the proenzyme. The autoendoproteolytic cleavage occurs by a canonical serine protease mechanism, in which the side chain hydroxyl group of the serine supplies its oxygen atom to form the C-terminus of the beta chain, while the remainder of the serine residue undergoes an oxidative deamination to produce ammonia and the pyruvoyl prosthetic group on the alpha chain. During this reaction, the Ser that is part of the protease active site of the proenzyme becomes the pyruvoyl prosthetic group, which constitutes an essential element of the active site of the mature decarboxylase.

The protein localises to the cell membrane. It catalyses the reaction a 1,2-diacyl-sn-glycero-3-phospho-L-serine + H(+) = a 1,2-diacyl-sn-glycero-3-phosphoethanolamine + CO2. The protein operates within phospholipid metabolism; phosphatidylethanolamine biosynthesis; phosphatidylethanolamine from CDP-diacylglycerol: step 2/2. Functionally, catalyzes the formation of phosphatidylethanolamine (PtdEtn) from phosphatidylserine (PtdSer). This is Phosphatidylserine decarboxylase proenzyme from Citrobacter koseri (strain ATCC BAA-895 / CDC 4225-83 / SGSC4696).